Reading from the N-terminus, the 323-residue chain is DNA-directed RNA polymerase subunit alpha (323 aa).

The alpha N-terminal domain (alpha-NTD) stretch occupies residues 1–233 (MGQEKVTVST…DLFIPFFHAE (233 aa)). An alpha C-terminal domain (alpha-CTD) region spans residues 264 to 323 (IALKYIYIDQSELPPRVYNCLKRSNINTFLELLNNSQEELMKIQDFRIEDVKHILDVLEI).

This sequence belongs to the RNA polymerase alpha chain family. In terms of assembly, in plastids the minimal PEP RNA polymerase catalytic core is composed of four subunits: alpha, beta, beta', and beta''. When a (nuclear-encoded) sigma factor is associated with the core the holoenzyme is formed, which can initiate transcription.

The protein localises to the plastid. Its subcellular location is the chloroplast. It carries out the reaction RNA(n) + a ribonucleoside 5'-triphosphate = RNA(n+1) + diphosphate. In terms of biological role, DNA-dependent RNA polymerase catalyzes the transcription of DNA into RNA using the four ribonucleoside triphosphates as substrates. The polypeptide is DNA-directed RNA polymerase subunit alpha (Morus indica (Mulberry)).